A 194-amino-acid chain; its full sequence is Casparian strip membrane protein 2 (194 aa).

Residues 1 to 32 (MSTTIDIPESSKVVKGKGVVAAPLRPGGWKKG) lie on the Cytoplasmic side of the membrane. The chain crosses the membrane as a helical span at residues 33–53 (VAIMDFILRLGAIAAALGAAA). The Extracellular portion of the chain corresponds to 54–82 (TMGTSDQTLPFFTQFFQFEASYDSFTTFQ). The helical transmembrane segment at 83 to 103 (FFVITMALVGGYLVLSLPFSV) threads the bilayer. Residues 104–115 (VAIIRPHAVGPR) lie on the Cytoplasmic side of the membrane. Residues 116–136 (LFLIILDTVFLTLATASAASA) form a helical membrane-spanning segment. At 137–168 (AAVVYLAHNGDQDTNWLAICNQFGDFCAQTSS) the chain is on the extracellular side. A helical membrane pass occupies residues 169–189 (AVVSSFVAVVVFVLLIVMSAL). The Cytoplasmic segment spans residues 190–194 (AMGKP).

The protein belongs to the Casparian strip membrane proteins (CASP) family. In terms of assembly, homodimer and heterodimers.

The protein localises to the cell membrane. Functionally, regulates membrane-cell wall junctions and localized cell wall deposition. Required for establishment of the Casparian strip membrane domain (CSD) and the subsequent formation of Casparian strips, a cell wall modification of the root endodermis that determines an apoplastic barrier between the intraorganismal apoplasm and the extraorganismal apoplasm and prevents lateral diffusion. This is Casparian strip membrane protein 2 from Vigna unguiculata (Cowpea).